The sequence spans 339 residues: Phosphate acyltransferase (339 aa).

The protein belongs to the PlsX family. Homodimer. Probably interacts with PlsY.

It localises to the cytoplasm. It carries out the reaction a fatty acyl-[ACP] + phosphate = an acyl phosphate + holo-[ACP]. Its pathway is lipid metabolism; phospholipid metabolism. Catalyzes the reversible formation of acyl-phosphate (acyl-PO(4)) from acyl-[acyl-carrier-protein] (acyl-ACP). This enzyme utilizes acyl-ACP as fatty acyl donor, but not acyl-CoA. This Vesicomyosocius okutanii subsp. Calyptogena okutanii (strain HA) protein is Phosphate acyltransferase.